The chain runs to 178 residues: Large ribosomal subunit protein uL6 (178 aa).

The protein belongs to the universal ribosomal protein uL6 family. Part of the 50S ribosomal subunit.

In terms of biological role, this protein binds to the 23S rRNA, and is important in its secondary structure. It is located near the subunit interface in the base of the L7/L12 stalk, and near the tRNA binding site of the peptidyltransferase center. The polypeptide is Large ribosomal subunit protein uL6 (Clavibacter sepedonicus (Clavibacter michiganensis subsp. sepedonicus)).